We begin with the raw amino-acid sequence, 101 residues long: Small ribosomal subunit protein uS14 (101 aa).

The protein belongs to the universal ribosomal protein uS14 family. In terms of assembly, part of the 30S ribosomal subunit. Contacts proteins S3 and S10.

Binds 16S rRNA, required for the assembly of 30S particles and may also be responsible for determining the conformation of the 16S rRNA at the A site. This is Small ribosomal subunit protein uS14 from Cupriavidus pinatubonensis (strain JMP 134 / LMG 1197) (Cupriavidus necator (strain JMP 134)).